Here is a 570-residue protein sequence, read N- to C-terminus: Alpha-glucosidase (570 aa).

Aspartate 206 serves as the catalytic Nucleophile. The active-site Proton donor is glutamate 263.

It belongs to the glycosyl hydrolase 13 family.

The enzyme catalyses Hydrolysis of terminal, non-reducing (1-&gt;4)-linked alpha-D-glucose residues with release of alpha-D-glucose.. This is Alpha-glucosidase (MAL2) from Candida albicans (Yeast).